The chain runs to 255 residues: Ciliogenesis and planar polarity effector 2 (255 aa).

Positions 52–255 are small GTPase-like; sequence PADIASYKLF…VIAGLVGGAD (204 aa). Residues 64-71 and 177-180 contribute to the GTP site; these read GRSGAGKT and TKLD.

Belongs to the small GTPase superfamily. Rab family.

It localises to the cytoplasm. The protein localises to the cytoskeleton. It is found in the cilium basal body. In terms of biological role, potential effector of the planar cell polarity signaling pathway. Plays a role in targeted membrane trafficking most probably at the level of vesicle fusion with membranes. Involved in cilium biogenesis by regulating the transport of cargo proteins to the basal body and to the apical tips of cilia. More generally involved in exocytosis in secretory cells. This Xenopus tropicalis (Western clawed frog) protein is Ciliogenesis and planar polarity effector 2 (cplane2).